An 890-amino-acid polypeptide reads, in one-letter code: DNA mismatch repair protein MutS (890 aa).

645-652 (GPNMAGKS) is a binding site for ATP.

Belongs to the DNA mismatch repair MutS family.

Functionally, this protein is involved in the repair of mismatches in DNA. It is possible that it carries out the mismatch recognition step. This protein has a weak ATPase activity. This is DNA mismatch repair protein MutS from Rickettsia conorii (strain ATCC VR-613 / Malish 7).